A 385-amino-acid chain; its full sequence is ELAV-like protein 4 (385 aa).

Residues 12–48 (TMEPQVSNGPTSNTSNGPSSNNRNCPSPMQTGAATDD) are disordered. Low complexity predominate over residues 18–33 (SNGPTSNTSNGPSSNN). Residues 34 to 44 (RNCPSPMQTGA) show a composition bias toward polar residues. Residue S38 is modified to Phosphoserine. 2 RRM domains span residues 51–129 (TNLI…YARP) and 137–217 (ANLY…FANN). S233 carries the post-translational modification Phosphoserine. R248 is modified (asymmetric dimethylarginine; by CARM1; alternate). R248 is modified (omega-N-methylarginine; by CARM1; alternate). The RRM 3 domain occupies 302 to 380 (WCIFVYNLSP…RVLQVSFKTN (79 aa)).

Belongs to the RRM elav family. In terms of assembly, component of a TAU mRNP complex, at least composed of IGF2BP1, ELAVL4 and G3BP. Associates with the EIF4F cap-binding complex, composed of EIF4G, EIF4A, EIF4E and PABP. Within the EIF4F cap-binding complex, interacts with EIF4A. Interacts with SMN (via Tudor domain) in an RNA-independent manner; the interaction is required for localization of ELAVL4 to RNA granules. Interacts with MAP1 light chain LC1 (via C-terminus); the interaction contributes to the association of ELAVL4 with microtubules. Interacts with MAP1 light chain LC2. In terms of processing, methylated by CARM1, which leads to reduced RNA-binding activity and enhanced interaction with SMN. Methylation at Arg-248 by CARM1 weakens protective binding to the 3'UTR of CDKN1A mRNA and down-regulates CDKN1A protein expression, thereby maintaining cells in a proliferative state. Methylation is inhibited by NGF, which facilitates neurite outgrowth. As to expression, expressed in the brain, including the hippocampus, and in pancreatic beta cells (at protein level). Expressed in pyramidal neurons of the hippocampal CA3 and CA1 region and in the hilus but not in dentate granule cells (at protein level). Expressed in the dorsal root ganglion and the spinal cord (at protein level). Expressed in neural stem and progenitor cells (at protein level). Expressed in radial glia-like cells and in transient amplifying cells in the subventricular zone (SVZ), and in immature neurons both in the SVZ and the rostral migratory stream as well as in mature neurons in the olfactory bulb (at protein level). Expressed in testis and in the brain, including the hippocampus, the neocortex and the cerebellum. Expressed in lower- but not upper-layer primary neurons of the mature neocortex, in the hippocampal regions CA1-3 and the dentate gyrus. Expressed in the mitral and granule cells of the olfactory bulb, cerebral cortex, entorhinal cortex, thalamus, medial habenula, amygdala, granule cells of the cerebellum, pons, olivary nucleus, dorsal and ventral spinal cord and in dorsal root ganglia. Expressed in motor neurons. Isoform 4: Expressed in the brain. Isoform 5: Expressed in the brain. Isoform 6: Expressed in the brain. Isoform 7: Expressed in the brain. Isoform 8: Expressed in the brain. Isoform 9: Expressed in the brain. Isoform 10: Expressed in the brain. Isoform 11: Expressed in the brain.

It localises to the cytoplasm. Its subcellular location is the perikaryon. The protein resides in the cell projection. It is found in the dendrite. The protein localises to the axon. It localises to the growth cone. Its function is as follows. RNA-binding protein that is involved in the post-transcriptional regulation of mRNAs. Plays a role in the regulation of mRNA stability, alternative splicing and translation. Binds to AU-rich element (ARE) sequences in the 3' untranslated region (3'UTR) of target mRNAs, including GAP43, VEGF, FOS, CDKN1A and ACHE mRNA. Many of the target mRNAs are coding for RNA-binding proteins, transcription factors and proteins involved in RNA processing and/or neuronal development and function. By binding to the mRNA 3'UTR, decreases mRNA deadenylation and thereby contributes to the stabilization of mRNA molecules and their protection from decay. Also binds to the polyadenylated (poly(A)) tail in the 3'UTR of mRNA, thereby increasing its affinity for mRNA binding. Mainly plays a role in neuron-specific RNA processing by stabilization of mRNAs such as GAP43, ACHE and mRNAs of other neuronal proteins, thereby contributing to the differentiation of neural progenitor cells, nervous system development, learning and memory mechanisms. Involved in the negative regulation of the proliferative activity of neuronal stem cells and in the positive regulation of neuronal differentiation of neural progenitor cells. Promotes neuronal differentiation of neural stem/progenitor cells in the adult subventricular zone of the hippocampus by binding to and stabilizing SATB1 mRNA. Binds and stabilizes MSI1 mRNA in neural stem cells. Exhibits increased binding to ACHE mRNA during neuronal differentiation, thereby stabilizing ACHE mRNA and enhancing its expression. Protects CDKN1A mRNA from decay by binding to its 3'-UTR. May bind to APP and BACE1 mRNAS and the BACE1AS lncRNA and enhance their stabilization. Plays a role in neurite outgrowth and in the establishment and maturation of dendritic arbors, thereby contributing to neocortical and hippocampal circuitry function. Stabilizes GAP43 mRNA and protects it from decay during postembryonic development in the brain. By promoting the stabilization of GAP43 mRNA, plays a role in NGF-mediated neurite outgrowth. Binds to BDNF long 3'UTR mRNA, thereby leading to its stabilization and increased dendritic translation after activation of PKC. By increasing translation of BDNF after nerve injury, may contribute to nerve regeneration. Acts as a stabilizing factor by binding to the 3'UTR of NOVA1 mRNA, thereby increasing its translation and enhancing its functional activity in neuron-specific splicing. Stimulates translation of mRNA in a poly(A)- and cap-dependent manner, possibly by associating with the EIF4F cap-binding complex. May also negatively regulate translation by binding to the 5'UTR of Ins2 mRNA, thereby repressing its translation. Upon glucose stimulation, Ins2 mRNA is released from ELAVL4 and translational inhibition is abolished. Also plays a role in the regulation of alternative splicing. May regulate alternative splicing of CALCA pre-mRNA into Calcitonin and Calcitonin gene-related peptide 1 (CGRP) by competing with splicing regulator TIAR for binding to U-rich sequences of CALCA pre-mRNA. This is ELAV-like protein 4 (Elavl4) from Mus musculus (Mouse).